The sequence spans 414 residues: Esterase FrsA (414 aa).

The protein belongs to the FrsA family.

It carries out the reaction a carboxylic ester + H2O = an alcohol + a carboxylate + H(+). Its function is as follows. Catalyzes the hydrolysis of esters. This chain is Esterase FrsA, found in Klebsiella pneumoniae (strain 342).